A 175-amino-acid chain; its full sequence is Peptide deformylase (175 aa).

The Fe cation site is built by C96 and H138. Residue E139 is part of the active site. H142 provides a ligand contact to Fe cation.

Belongs to the polypeptide deformylase family. It depends on Fe(2+) as a cofactor.

It catalyses the reaction N-terminal N-formyl-L-methionyl-[peptide] + H2O = N-terminal L-methionyl-[peptide] + formate. Its function is as follows. Removes the formyl group from the N-terminal Met of newly synthesized proteins. Requires at least a dipeptide for an efficient rate of reaction. N-terminal L-methionine is a prerequisite for activity but the enzyme has broad specificity at other positions. This Campylobacter jejuni subsp. jejuni serotype O:2 (strain ATCC 700819 / NCTC 11168) protein is Peptide deformylase.